The sequence spans 312 residues: Pyridoxal kinase (312 aa).

M1 carries the post-translational modification N-acetylmethionine. Pyridoxal-binding residues include S12 and T47. T47 provides a ligand contact to pyridoxal 5'-phosphate. At S59 the chain carries Phosphoserine. Residue D113 participates in ATP binding. D113 provides a ligand contact to Na(+). D118 is a binding site for Mg(2+). T148 contributes to the Na(+) binding site. 150–153 (NQFE) contributes to the ATP binding site. Phosphoserine is present on S164. T186 serves as a coordination point for Na(+). Residue 186–187 (TS) participates in ATP binding. At S213 the chain carries Phosphoserine. Residues 226-228 (VDA) and T233 each bind ATP. Position 234–235 (234–235 (GD)) interacts with pyridoxal 5'-phosphate. D235 acts as the Proton acceptor in catalysis. S285 is modified (phosphoserine).

Belongs to the pyridoxine kinase family. As to quaternary structure, homodimer. Mg(2+) is required as a cofactor. Requires Zn(2+) as cofactor. It depends on Co(2+) as a cofactor. The cofactor is Mn(2+). In terms of tissue distribution, ubiquitous. Highly expressed in testis. In adult testis and spermatozoa.

It localises to the cytoplasm. Its subcellular location is the cytosol. It catalyses the reaction pyridoxal + ATP = pyridoxal 5'-phosphate + ADP + H(+). It carries out the reaction pyridoxamine + ATP = pyridoxamine 5'-phosphate + ADP + H(+). The catalysed reaction is pyridoxine + ATP = pyridoxine 5'-phosphate + ADP + H(+). It participates in cofactor metabolism; pyridoxal 5'-phosphate salvage; pyridoxal 5'-phosphate from pyridoxal: step 1/1. The protein operates within cofactor metabolism; pyridoxal 5'-phosphate salvage; pyridoxine 5'-phosphate from pyridoxine: step 1/1. It functions in the pathway cofactor metabolism; pyridoxal 5'-phosphate salvage; pyridoxamine 5'-phosphate from pyridoxamine: step 1/1. Its activity is regulated as follows. Catalytic activity is inhibited competitively by 4-deoxypyridoxine, and is also inhibited by the benzodiazepine receptor ligands 1012S and ethyl-beta-carboline-3-carboxylate. Inhibited by ginkgotoxin, theophylline, lamotrigine, enprofylline, theobromine, and caffeine. Activity is increased in the presence of K(+)or Na(+). Catalyzes the phosphorylation of the dietary vitamin B6 vitamers pyridoxal (PL), pyridoxine (PN) and pyridoxamine (PM) to form pyridoxal 5'-phosphate (PLP), pyridoxine 5'-phosphate (PNP) and pyridoxamine 5'-phosphate (PMP), respectively. PLP is the active form of vitamin B6, and acts as a cofactor for over 140 different enzymatic reactions. The chain is Pyridoxal kinase from Homo sapiens (Human).